Here is an 87-residue protein sequence, read N- to C-terminus: Polyketide-8 synthase acyl carrier protein 2 (87 aa).

Residues 8–83 (ALDKEQLREL…GTYELLTSKL (76 aa)) enclose the Carrier domain. O-(pantetheine 4'-phosphoryl)serine is present on Ser43.

In terms of processing, 4'-phosphopantetheine is transferred from CoA to a specific serine of the apo-ACP-like protein.

Its function is as follows. Acyl carrier protein. In Streptomyces avermitilis (strain ATCC 31267 / DSM 46492 / JCM 5070 / NBRC 14893 / NCIMB 12804 / NRRL 8165 / MA-4680), this protein is Polyketide-8 synthase acyl carrier protein 2.